A 461-amino-acid polypeptide reads, in one-letter code: GTPase Der (461 aa).

EngA-type G domains lie at 2 to 164 and 197 to 369; these read QSII…NENF and IKVG…ANFT. Residues 8–15, 55–59, 116–119, 203–210, 250–254, and 314–317 contribute to the GTP site; these read GKPNVGKS, DSGGL, NKID, GRVNVGKS, DTAGI, and NKWD. The KH-like domain maps to 370–454; it reads QKIPTAKLNA…PLIIVSRKKG (85 aa).

Belongs to the TRAFAC class TrmE-Era-EngA-EngB-Septin-like GTPase superfamily. EngA (Der) GTPase family. Associates with the 50S ribosomal subunit.

Its function is as follows. GTPase that plays an essential role in the late steps of ribosome biogenesis. The chain is GTPase Der from Campylobacter lari (strain RM2100 / D67 / ATCC BAA-1060).